The sequence spans 498 residues: ATP synthase subunit beta, chloroplastic (498 aa).

Residue 172 to 179 participates in ATP binding; that stretch reads GGAGVGKT.

This sequence belongs to the ATPase alpha/beta chains family. As to quaternary structure, F-type ATPases have 2 components, CF(1) - the catalytic core - and CF(0) - the membrane proton channel. CF(1) has five subunits: alpha(3), beta(3), gamma(1), delta(1), epsilon(1). CF(0) has four main subunits: a(1), b(1), b'(1) and c(9-12).

Its subcellular location is the plastid. The protein localises to the chloroplast thylakoid membrane. The catalysed reaction is ATP + H2O + 4 H(+)(in) = ADP + phosphate + 5 H(+)(out). Functionally, produces ATP from ADP in the presence of a proton gradient across the membrane. The catalytic sites are hosted primarily by the beta subunits. This Citrus sinensis (Sweet orange) protein is ATP synthase subunit beta, chloroplastic.